The following is a 338-amino-acid chain: MEEINKKDTFIEPILKENKDRFVLFPIKYPDIWRMYKKALASHWVAEEIDLGNDNVDWEYKLTDNERHFISHVLAFFAASDGIVNENLATRFMSEVQIPEARCFYGFQIAIENIHSETYSLLIETYIKDKQTKDKLFNAIETIPCIKKKAEWALRWINDSDSFAERLVAFAAVEGIFFSGSFCSIFWLKKRGLMQGLTFSNELISRDEGLHCDFACLLYTKLQRKLDPKVIEKMIRDAVECEKEFICESLPVDLIGMNSRSMSQYIEFCADRLVVSLGYKKIFNSSNPFEWMEMISLQRKSNFFEGKVAEYAKTGVAIQGNNQQKNNQSRTLVLDEDF.

Fe cation is bound by residues aspartate 81, glutamate 112, and histidine 115. Residue tyrosine 119 is part of the active site. The Fe cation site is built by glutamate 174, glutamate 208, and histidine 211.

This sequence belongs to the ribonucleoside diphosphate reductase small chain family. In terms of assembly, heterodimer of a large and a small subunit. Requires Fe cation as cofactor.

The protein localises to the cytoplasm. The catalysed reaction is a 2'-deoxyribonucleoside 5'-diphosphate + [thioredoxin]-disulfide + H2O = a ribonucleoside 5'-diphosphate + [thioredoxin]-dithiol. Its function is as follows. Provides the precursors necessary for DNA synthesis. Catalyzes the biosynthesis of deoxyribonucleotides from the corresponding ribonucleotides. The protein is Ribonucleoside-diphosphate reductase small subunit (rnrB-1) of Dictyostelium discoideum (Social amoeba).